The following is a 109-amino-acid chain: MTETEFLALVDQVLDSIESQADDWAAGLDVDIEATRSGNVLTLVFEDGTQVVVNVQAAMQELWVAARSGGFHYRYDGQHWNDTRGGPRLPDALSQICSEAAGVPVSVRL.

This sequence belongs to the frataxin family.

Functionally, involved in iron-sulfur (Fe-S) cluster assembly. May act as a regulator of Fe-S biogenesis. This Bordetella pertussis (strain Tohama I / ATCC BAA-589 / NCTC 13251) protein is Iron-sulfur cluster assembly protein CyaY.